The following is a 998-amino-acid chain: Collagen alpha-1(I) chain (998 aa).

The tract at residues 1 to 998 (SYGYDEKGGV…GPPGPPGPPG (998 aa)) is disordered. Positions 9–22 (GVSVPGPMGPSGPR) are enriched in low complexity. 11 positions are modified to 4-hydroxyproline: Pro-25, Pro-28, Pro-30, Pro-39, Pro-42, Pro-45, Pro-59, Pro-74, Pro-80, Pro-89, and Pro-95. Over residues 62 to 76 (NGDDGEAGKPGRPGE) the composition is skewed to basic and acidic residues. Lys-98 bears the 5-hydroxylysine; alternate mark. Lys-98 is a glycosylation site (O-linked (Gal...) hydroxylysine; alternate). At Ser-104 the chain carries Phosphoserine. Low complexity predominate over residues 112-128 (DAGPAGPKGEPGSPGEN). A 4-hydroxyproline mark is found at Pro-122, Pro-125, Pro-131, Pro-140, Pro-146, Pro-167, Pro-176, Pro-179, Pro-206, Pro-209, Pro-221, Pro-227, Pro-236, Pro-242, Pro-245, and Pro-260. Over residues 146–164 (PGASGPAGARGNDGATGAA) the composition is skewed to low complexity. A compositionally biased stretch (pro residues) spans 166-178 (PPGPTGPAGPPGF). Residues 212–251 (AGAAGPAGNPGADGQPGAKGANGAPGIAGAPGFPGARGPS) show a composition bias toward low complexity. Residue Lys-263 is modified to 5-hydroxylysine. 8 positions are modified to 4-hydroxyproline: Pro-269, Pro-272, Pro-284, Pro-293, Pro-308, Pro-314, Pro-323, and Pro-329. Residues 318–327 (GERGGPGSRG) show a composition bias toward gly residues. A 5-hydroxylysine modification is found at Lys-338. 4-hydroxyproline occurs at positions 347, 356, 362, 368, 377, 380, 389, 398, 404, 416, 425, 434, 437, 455, 472, 478, 484, 490, 496, 502, 514, 523, 537, 543, and 552. Residues 371-397 (KGLTGSPGSPGPDGKTGPPGPAGQDGR) are compositionally biased toward low complexity. A compositionally biased stretch (low complexity) spans 406-425 (ARGQAGVMGFPGPKGAAGEP). The segment covering 484-493 (PGEAGKPGEQ) has biased composition (low complexity). Position 564 is a 5-hydroxylysine (Lys-564). A 4-hydroxyproline mark is found at Pro-570, Pro-585, and Pro-591. The segment covering 597–611 (SGPSGPAGPTGARGA) has biased composition (low complexity). Ser-600 is subject to Phosphoserine. 8 positions are modified to 4-hydroxyproline: Pro-612, Pro-618, Pro-621, Pro-630, Pro-636, Pro-654, Pro-663, and Pro-672. Residues 624 to 651 (AGFAGPPGADGQPGAKGEPGDAGAKGDA) are compositionally biased toward low complexity. Positions 653–665 (PPGPAGPTGPPGP) are enriched in pro residues. At Lys-675 the chain carries 5-hydroxylysine. Positions 680–696 (SAGPPGATGFPGAAGRV) are enriched in low complexity. A 4-hydroxyproline mark is found at Pro-684 and Pro-690. Pro-698 bears the 3-hydroxyproline mark. A 4-hydroxyproline mark is found at Pro-699, Pro-708, Pro-711, Pro-732, Pro-741, Pro-749, Pro-758, Pro-776, Pro-785, Pro-788, Pro-794, Pro-809, Pro-815, Pro-821, Pro-830, and Pro-836. Residues 725-734 (ETGPAGRPGE) show a composition bias toward low complexity. The segment covering 746–758 (KGSPGADGPAGAP) has biased composition (low complexity). Residues 808 to 818 (PPGPMGPPGLA) show a composition bias toward pro residues. Residue Lys-845 is modified to 5-hydroxylysine. Residues 853–868 (PGPPGAPGAPGAPGPV) show a composition bias toward pro residues. 4-hydroxyproline is present on residues Pro-856, Pro-859, and Pro-862. Residues 889-903 (AGPAGARGPAGPQGP) show a composition bias toward low complexity. The span at 904 to 918 (RGDKGETGEQGDRGI) shows a compositional bias: basic and acidic residues. A 5-hydroxylysine modification is found at Lys-907. Lys-919 is subject to 5-hydroxylysine; alternate. O-linked (Gal...) hydroxylysine; alternate glycosylation is present at Lys-919. Pro-934, Pro-937, Pro-955, and Pro-970 each carry 4-hydroxyproline. Residues 937 to 970 (PGEQGPSGASGPAGPRGPPGSAGSPGKDGLNGLP) show a composition bias toward low complexity. At Pro-975 the chain carries 3-hydroxyproline. Position 976 is a 4-hydroxyproline (Pro-976). The segment covering 988–998 (VGPPGPPGPPG) has biased composition (pro residues). 3-hydroxyproline is present on Pro-990. Pro-991 bears the 4-hydroxyproline mark. Pro-993 carries the post-translational modification 3-hydroxyproline. Pro-994 is modified (4-hydroxyproline). The residue at position 996 (Pro-996) is a 3-hydroxyproline. Pro-997 bears the 4-hydroxyproline mark.

The protein belongs to the fibrillar collagen family. In terms of assembly, trimers of one alpha 2(I) and two alpha 1(I) chains. Post-translationally, contains mostly 4-hydroxyproline. Proline residues at the third position of the tripeptide repeating unit (G-X-Y) are hydroxylated in some or all of the chains. In terms of processing, contains 3-hydroxyproline at a few sites. This modification occurs on the first proline residue in the sequence motif Gly-Pro-Hyp, where Hyp is 4-hydroxyproline. Lysine residues at the third position of the tripeptide repeating unit (G-X-Y) are 5-hydroxylated in some or all of the chains. Post-translationally, O-glycosylated on hydroxylated lysine residues. The O-linked glycan consists of a Glc-Gal disaccharide. Expressed in bones.

It localises to the secreted. It is found in the extracellular space. The protein localises to the extracellular matrix. Type I collagen is a member of group I collagen (fibrillar forming collagen). The polypeptide is Collagen alpha-1(I) chain (Nothrotheriops shastensis (Shasta ground sloth)).